Consider the following 303-residue polypeptide: Proteasome subunit beta (303 aa).

Positions M1–G67 are cleaved as a propeptide — removed in mature form; by autocatalysis. The active-site Nucleophile is T68.

It belongs to the peptidase T1B family. As to quaternary structure, the 20S proteasome core is composed of 14 alpha and 14 beta subunits that assemble into four stacked heptameric rings, resulting in a barrel-shaped structure. The two inner rings, each composed of seven catalytic beta subunits, are sandwiched by two outer rings, each composed of seven alpha subunits. The catalytic chamber with the active sites is on the inside of the barrel. Has a gated structure, the ends of the cylinder being occluded by the N-termini of the alpha-subunits. Is capped by the proteasome-associated ATPase, ARC.

The protein localises to the cytoplasm. The enzyme catalyses Cleavage of peptide bonds with very broad specificity.. It participates in protein degradation; proteasomal Pup-dependent pathway. The formation of the proteasomal ATPase ARC-20S proteasome complex, likely via the docking of the C-termini of ARC into the intersubunit pockets in the alpha-rings, may trigger opening of the gate for substrate entry. Interconversion between the open-gate and close-gate conformations leads to a dynamic regulation of the 20S proteasome proteolysis activity. In terms of biological role, component of the proteasome core, a large protease complex with broad specificity involved in protein degradation. The polypeptide is Proteasome subunit beta (Mycolicibacterium paratuberculosis (strain ATCC BAA-968 / K-10) (Mycobacterium paratuberculosis)).